The primary structure comprises 163 residues: Flagellar assembly factor FliW (163 aa).

The span at 136 to 156 shows a compositional bias: basic and acidic residues; sequence PFFETSEKKQSGLQRLERQPE. The segment at 136 to 163 is disordered; the sequence is PFFETSEKKQSGLQRLERQPEKSVPPAG.

Belongs to the FliW family. As to quaternary structure, interacts with translational regulator CsrA and flagellin(s).

The protein localises to the cytoplasm. Its function is as follows. Acts as an anti-CsrA protein, binds CsrA and prevents it from repressing translation of its target genes, one of which is flagellin. Binds to flagellin and participates in the assembly of the flagellum. This Geotalea uraniireducens (strain Rf4) (Geobacter uraniireducens) protein is Flagellar assembly factor FliW.